The following is a 190-amino-acid chain: Ferric nitrobindin-like protein (190 aa).

The GXWXGXG motif lies at 20–26; that stretch reads GNWAGAG.

The protein belongs to the nitrobindin family.

The sequence is that of Ferric nitrobindin-like protein from Streptomyces griseus subsp. griseus (strain JCM 4626 / CBS 651.72 / NBRC 13350 / KCC S-0626 / ISP 5235).